The following is a 407-amino-acid chain: Tyrosine--tRNA ligase (407 aa).

Tyr-35 is an L-tyrosine binding site. The short motif at 40–49 (PTADSLHVGH) is the 'HIGH' region element. Tyr-168 and Gln-172 together coordinate L-tyrosine. Residues 228 to 232 (KMGKT) carry the 'KMSKS' region motif. Residue Lys-231 participates in ATP binding. Residues 341-405 (NSLVDLLAKC…RGKKNFNRIV (65 aa)) enclose the S4 RNA-binding domain.

Belongs to the class-I aminoacyl-tRNA synthetase family. TyrS type 1 subfamily. Homodimer.

It localises to the cytoplasm. The enzyme catalyses tRNA(Tyr) + L-tyrosine + ATP = L-tyrosyl-tRNA(Tyr) + AMP + diphosphate + H(+). Its function is as follows. Catalyzes the attachment of tyrosine to tRNA(Tyr) in a two-step reaction: tyrosine is first activated by ATP to form Tyr-AMP and then transferred to the acceptor end of tRNA(Tyr). This is Tyrosine--tRNA ligase from Clostridium botulinum (strain Loch Maree / Type A3).